Consider the following 156-residue polypeptide: Small ribosomal subunit protein uS7 (156 aa).

It belongs to the universal ribosomal protein uS7 family. As to quaternary structure, part of the 30S ribosomal subunit. Contacts proteins S9 and S11.

One of the primary rRNA binding proteins, it binds directly to 16S rRNA where it nucleates assembly of the head domain of the 30S subunit. Is located at the subunit interface close to the decoding center, probably blocks exit of the E-site tRNA. This is Small ribosomal subunit protein uS7 from Wigglesworthia glossinidia brevipalpis.